The primary structure comprises 354 residues: Membrane progestin receptor beta (354 aa).

Residues 1-75 (MTTAILERLS…FFSLFQKHNE (75 aa)) lie on the Cytoplasmic side of the membrane. A helical transmembrane segment spans residues 76 to 96 (VVNVWTHLLAALAVLLRFWAF). Topologically, residues 97–111 (AEAEALPWASTHSLP) are extracellular. A helical transmembrane segment spans residues 112-132 (LLLFILSSITYLTCSLLAHLL). Residues 133–174 (QSKSELSHYTFYFVDYVGVSVYQYGSALAHFFYSSDQAWYDR) are Cytoplasmic-facing. Residues 175–195 (FWLFFLPAAAFCGWLSCAGCC) form a helical membrane-spanning segment. Over 196–213 (YAKYRYRRPYPVMRKICQ) the chain is Extracellular. The chain crosses the membrane as a helical span at residues 214–234 (VVPAGLAFILDISPVAHRVAL). Over 235-243 (CHLAGCQEQ) the chain is Cytoplasmic. The chain crosses the membrane as a helical span at residues 244–264 (AAWYHTLQILFFLVSAYFFSC). Residues 265-283 (PVPEKYFPGSCDIVGHGHQ) are Extracellular-facing. Residues 284 to 304 (IFHAFLSICTLSQLEAILLDY) traverse the membrane as a helical segment. Residues 305 to 319 (QGRQEIFLQRHGPLS) lie on the Cytoplasmic side of the membrane. The chain crosses the membrane as a helical span at residues 320–340 (VHMACLSFFFLAACSAATAAL). The Extracellular segment spans residues 341 to 354 (LRHKVKARLTKKDS).

Belongs to the ADIPOR family. Highly expressed in the hypothalamus. Also expressed in spinal cord, kidney and testis.

It localises to the cell membrane. In terms of biological role, plasma membrane progesterone (P4) receptor coupled to G proteins. Seems to act through a G(i) mediated pathway. May be involved in oocyte maturation. Also binds dehydroepiandrosterone (DHEA), pregnanolone, pregnenolone and allopregnanolone. This is Membrane progestin receptor beta from Homo sapiens (Human).